A 692-amino-acid chain; its full sequence is Elongation factor G (692 aa).

In terms of domain architecture, tr-type G spans 8 to 282 (DKTRNIGIMA…AVLDYLPAPT (275 aa)). GTP contacts are provided by residues 17–24 (AHIDAGKT), 81–85 (DTPGH), and 135–138 (NKMD).

This sequence belongs to the TRAFAC class translation factor GTPase superfamily. Classic translation factor GTPase family. EF-G/EF-2 subfamily.

Its subcellular location is the cytoplasm. In terms of biological role, catalyzes the GTP-dependent ribosomal translocation step during translation elongation. During this step, the ribosome changes from the pre-translocational (PRE) to the post-translocational (POST) state as the newly formed A-site-bound peptidyl-tRNA and P-site-bound deacylated tRNA move to the P and E sites, respectively. Catalyzes the coordinated movement of the two tRNA molecules, the mRNA and conformational changes in the ribosome. This Bacillus pumilus (strain SAFR-032) protein is Elongation factor G.